Consider the following 71-residue polypeptide: MKEGIHPKLVPARIICGCGNVIETYSTKPEIYVEVCSKCHPFYTGQQRFVDTEGRVERFQRRYGDSYRKGR.

Zn(2+) is bound by residues cysteine 16, cysteine 18, cysteine 36, and cysteine 39.

The protein belongs to the bacterial ribosomal protein bL31 family. Type A subfamily. As to quaternary structure, part of the 50S ribosomal subunit. Zn(2+) serves as cofactor.

In terms of biological role, binds the 23S rRNA. The sequence is that of Large ribosomal subunit protein bL31 from Thermus thermophilus (strain ATCC BAA-163 / DSM 7039 / HB27).